Here is a 423-residue protein sequence, read N- to C-terminus: Probable peptidoglycan glycosyltransferase FtsW (423 aa).

Topologically, residues Met-1–Leu-53 are cytoplasmic. Residues Leu-54–Ile-74 form a helical membrane-spanning segment. At Thr-75 to Asn-88 the chain is on the periplasmic side. The helical transmembrane segment at Phe-89–Phe-109 threads the bilayer. Residues Lys-110–Tyr-119 lie on the Cytoplasmic side of the membrane. Residues Ser-120–Gly-140 traverse the membrane as a helical segment. The Periplasmic portion of the chain corresponds to Arg-141–Trp-149. A helical membrane pass occupies residues Ile-150–Phe-170. Over Ala-171 to Ser-184 the chain is Cytoplasmic. The helical transmembrane segment at Phe-185 to Ala-205 threads the bilayer. The Periplasmic portion of the chain corresponds to Glu-206–Asp-208. The chain crosses the membrane as a helical span at residues Met-209–Asn-229. Over Ala-230–Lys-231 the chain is Cytoplasmic. The helical transmembrane segment at Leu-232 to Pro-252 threads the bilayer. Over Leu-253–Asp-310 the chain is Periplasmic. A helical membrane pass occupies residues Phe-311 to Leu-331. The Cytoplasmic segment spans residues Phe-332–Lys-359. Residues Gly-360 to Leu-380 traverse the membrane as a helical segment. The Periplasmic portion of the chain corresponds to Pro-381–Thr-386. Residues Leu-387 to Leu-407 traverse the membrane as a helical segment. Residues Leu-408–Leu-423 are Cytoplasmic-facing.

The protein belongs to the SEDS family. FtsW subfamily.

It is found in the cell inner membrane. The enzyme catalyses [GlcNAc-(1-&gt;4)-Mur2Ac(oyl-L-Ala-gamma-D-Glu-L-Lys-D-Ala-D-Ala)](n)-di-trans,octa-cis-undecaprenyl diphosphate + beta-D-GlcNAc-(1-&gt;4)-Mur2Ac(oyl-L-Ala-gamma-D-Glu-L-Lys-D-Ala-D-Ala)-di-trans,octa-cis-undecaprenyl diphosphate = [GlcNAc-(1-&gt;4)-Mur2Ac(oyl-L-Ala-gamma-D-Glu-L-Lys-D-Ala-D-Ala)](n+1)-di-trans,octa-cis-undecaprenyl diphosphate + di-trans,octa-cis-undecaprenyl diphosphate + H(+). Its pathway is cell wall biogenesis; peptidoglycan biosynthesis. Its function is as follows. Peptidoglycan polymerase that is essential for cell division. This chain is Probable peptidoglycan glycosyltransferase FtsW, found in Polynucleobacter necessarius subsp. necessarius (strain STIR1).